Consider the following 68-residue polypeptide: Large ribosomal subunit protein bL35 (68 aa).

The protein belongs to the bacterial ribosomal protein bL35 family.

The chain is Large ribosomal subunit protein bL35 from Rickettsia akari (strain Hartford).